Here is a 325-residue protein sequence, read N- to C-terminus: Beta-ketoacyl-[acyl-carrier-protein] synthase III (325 aa).

Active-site residues include Cys116 and His252. Residues Gln253–Arg257 form an ACP-binding region. Residue Asn282 is part of the active site.

The protein belongs to the thiolase-like superfamily. FabH family. In terms of assembly, homodimer.

Its subcellular location is the cytoplasm. The catalysed reaction is butanoyl-CoA + malonyl-[ACP] + H(+) = 3-oxohexanoyl-[ACP] + CO2 + CoA. It catalyses the reaction hexanoyl-CoA + malonyl-[ACP] + H(+) = 3-oxooctanoyl-[ACP] + CO2 + CoA. The enzyme catalyses octanoyl-CoA + malonyl-[ACP] + H(+) = 3-oxodecanoyl-[ACP] + CO2 + CoA. It carries out the reaction decanoyl-CoA + malonyl-[ACP] + H(+) = 3-oxododecanoyl-[ACP] + CO2 + CoA. The catalysed reaction is 2-methylpropanoyl-CoA + malonyl-[ACP] + H(+) = 4-methyl-3-oxopentanoyl-[ACP] + CO2 + CoA. It catalyses the reaction 3-methylbutanoyl-CoA + malonyl-[ACP] + H(+) = 5-methyl-3-oxohexanoyl-[ACP] + CO2 + CoA. The enzyme catalyses malonyl-[ACP] + acetyl-CoA + H(+) = 3-oxobutanoyl-[ACP] + CO2 + CoA. The protein operates within lipid metabolism; fatty acid biosynthesis. In terms of biological role, catalyzes the condensation reaction of fatty acid synthesis by the addition to an acyl acceptor of two carbons from malonyl-ACP. Catalyzes the first condensation reaction which initiates fatty acid synthesis and may therefore play a role in governing the total rate of fatty acid production. Possesses both acetoacetyl-ACP synthase and acetyl transacylase activities. Can use a wide range of acyl-CoAs as the primer substrate in vitro, with a slight preference for short, medium-straight chain acyl-CoAs. Can also use branched-chain acyl-CoAs and acetyl-CoA. The chain is Beta-ketoacyl-[acyl-carrier-protein] synthase III from Xanthomonas campestris pv. campestris (strain 8004).